Consider the following 1217-residue polypeptide: ATP-dependent helicase/nuclease subunit A (1217 aa).

The UvrD-like helicase ATP-binding domain occupies Val-10–Arg-475. Residue Ala-31 to Thr-38 participates in ATP binding. One can recognise a UvrD-like helicase C-terminal domain in the interval Lys-476–Gly-786.

It belongs to the helicase family. AddA subfamily. As to quaternary structure, heterodimer of AddA and AddB/RexB. Mg(2+) is required as a cofactor.

The enzyme catalyses Couples ATP hydrolysis with the unwinding of duplex DNA by translocating in the 3'-5' direction.. The catalysed reaction is ATP + H2O = ADP + phosphate + H(+). Functionally, the heterodimer acts as both an ATP-dependent DNA helicase and an ATP-dependent, dual-direction single-stranded exonuclease. Recognizes the chi site generating a DNA molecule suitable for the initiation of homologous recombination. The AddA nuclease domain is required for chi fragment generation; this subunit has the helicase and 3' -&gt; 5' nuclease activities. The sequence is that of ATP-dependent helicase/nuclease subunit A from Staphylococcus aureus (strain MSSA476).